We begin with the raw amino-acid sequence, 333 residues long: T-cell surface glycoprotein CD1b-2 (333 aa).

A signal peptide spans 1 to 20 (MLLLPLLLLGVILPGGDNED). The Extracellular segment spans residues 21–302 (VFQGPTSFHL…LYWGHPTSIG (282 aa)). N-linked (GlcNAc...) asparagine glycans are attached at residues N38, N75, and N146. 3 cysteine pairs are disulfide-bonded: C120-C184, C149-C163, and C224-C279. The 111-residue stretch at 185–295 (PRYLLGVLDA…LGDQDIILYW (111 aa)) folds into the Ig-like domain. A helical transmembrane segment spans residues 303–323 (LILVAIIVPSLILSICLALWF). At 324–333 (WRRWSYQNIL) the chain is on the cytoplasmic side. The short motif at 329 to 332 (YQNI) is the Internalization signal element.

Heterodimer with B2M (beta-2-microglobulin). Interacts with saposin C.

The protein resides in the cell membrane. Its subcellular location is the endosome membrane. It is found in the lysosome membrane. Functionally, antigen-presenting protein that binds self and non-self lipid and glycolipid antigens and presents them to T-cell receptors on natural killer T-cells. This chain is T-cell surface glycoprotein CD1b-2, found in Ovis aries (Sheep).